The primary structure comprises 391 residues: Multidrug resistance protein MdtL (391 aa).

12 helical membrane-spanning segments follow: residues phenylalanine 4 to valine 24, isoleucine 42 to alanine 62, proline 69 to glutamate 89, leucine 93 to phenylalanine 113, leucine 131 to methionine 151, serine 158 to leucine 178, phenylalanine 203 to valine 222, alanine 245 to phenylalanine 265, threonine 269 to proline 289, valine 293 to methionine 313, leucine 331 to isoleucine 351, and methionine 356 to alanine 376.

Belongs to the major facilitator superfamily. DHA1 family. MdtL (TC 2.A.1.2.22) subfamily.

The protein resides in the cell inner membrane. Confers resistance to chloramphenicol. The protein is Multidrug resistance protein MdtL of Escherichia coli O17:K52:H18 (strain UMN026 / ExPEC).